The primary structure comprises 164 residues: Protein-export protein SecB (164 aa).

Belongs to the SecB family. In terms of assembly, homotetramer, a dimer of dimers. One homotetramer interacts with 1 SecA dimer.

It is found in the cytoplasm. Its function is as follows. One of the proteins required for the normal export of preproteins out of the cell cytoplasm. It is a molecular chaperone that binds to a subset of precursor proteins, maintaining them in a translocation-competent state. It also specifically binds to its receptor SecA. This Herminiimonas arsenicoxydans protein is Protein-export protein SecB.